We begin with the raw amino-acid sequence, 504 residues long: ATP synthase subunit alpha (504 aa).

Position 169 to 176 (169 to 176) interacts with ATP; that stretch reads GDRQTGKT.

It belongs to the ATPase alpha/beta chains family. F-type ATPases have 2 components, CF(1) - the catalytic core - and CF(0) - the membrane proton channel. CF(1) has five subunits: alpha(3), beta(3), gamma(1), delta(1), epsilon(1). CF(0) has three main subunits: a(1), b(2) and c(9-12). The alpha and beta chains form an alternating ring which encloses part of the gamma chain. CF(1) is attached to CF(0) by a central stalk formed by the gamma and epsilon chains, while a peripheral stalk is formed by the delta and b chains.

The protein resides in the cell membrane. The enzyme catalyses ATP + H2O + 4 H(+)(in) = ADP + phosphate + 5 H(+)(out). In terms of biological role, produces ATP from ADP in the presence of a proton gradient across the membrane. The alpha chain is a regulatory subunit. In Clostridium botulinum (strain Langeland / NCTC 10281 / Type F), this protein is ATP synthase subunit alpha.